Reading from the N-terminus, the 822-residue chain is Endonuclease MutS2 (822 aa).

An ATP-binding site is contributed by 348–355 (GPNTGGKT). Residues 707–737 (SLNGKKVEPPPKSEPVPKKVKAEPPATEAKS) are disordered. A compositionally biased stretch (basic and acidic residues) spans 709 to 728 (NGKKVEPPPKSEPVPKKVKA). The region spanning 749 to 822 (LDCRGDRLER…GAGVTIAYLR (74 aa)) is the Smr domain.

This sequence belongs to the DNA mismatch repair MutS family. MutS2 subfamily. Homodimer. Binds to stalled ribosomes, contacting rRNA.

Functionally, endonuclease that is involved in the suppression of homologous recombination and thus may have a key role in the control of bacterial genetic diversity. In terms of biological role, acts as a ribosome collision sensor, splitting the ribosome into its 2 subunits. Detects stalled/collided 70S ribosomes which it binds and splits by an ATP-hydrolysis driven conformational change. Acts upstream of the ribosome quality control system (RQC), a ribosome-associated complex that mediates the extraction of incompletely synthesized nascent chains from stalled ribosomes and their subsequent degradation. Probably generates substrates for RQC. In Synechocystis sp. (strain ATCC 27184 / PCC 6803 / Kazusa), this protein is Endonuclease MutS2.